A 102-amino-acid polypeptide reads, in one-letter code: Noncompact myelin-associated protein (102 aa).

At 1–30 (MTTATPLGDTTFFSLNMTTRGEDFLYKSSG) the chain is on the extracellular side. A helical transmembrane segment spans residues 31 to 51 (AIVAAVVVVVIIIFTVVLILL). The Cytoplasmic portion of the chain corresponds to 52–102 (KMYNRKMRTRRELEPKGPKPTAPSAVGPNSNGSQHPATVTFSPVDVQVETR). Residues 60 to 102 (TRRELEPKGPKPTAPSAVGPNSNGSQHPATVTFSPVDVQVETR) are disordered. Over residues 78–92 (GPNSNGSQHPATVTF) the composition is skewed to polar residues.

Post-translationally, glycosylated.

It is found in the cell membrane. Its function is as follows. Plays a role in myelin formation. The polypeptide is Noncompact myelin-associated protein (NCMAP) (Homo sapiens (Human)).